The chain runs to 133 residues: Small ribosomal subunit protein uS9 (133 aa).

This sequence belongs to the universal ribosomal protein uS9 family.

In Ureaplasma parvum serovar 3 (strain ATCC 700970), this protein is Small ribosomal subunit protein uS9.